The following is a 479-amino-acid chain: UDP-N-acetylmuramate--L-alanine ligase (479 aa).

127–133 serves as a coordination point for ATP; that stretch reads GTHGKTT.

Belongs to the MurCDEF family.

It localises to the cytoplasm. The enzyme catalyses UDP-N-acetyl-alpha-D-muramate + L-alanine + ATP = UDP-N-acetyl-alpha-D-muramoyl-L-alanine + ADP + phosphate + H(+). Its pathway is cell wall biogenesis; peptidoglycan biosynthesis. Its function is as follows. Cell wall formation. The chain is UDP-N-acetylmuramate--L-alanine ligase from Shewanella denitrificans (strain OS217 / ATCC BAA-1090 / DSM 15013).